A 345-amino-acid polypeptide reads, in one-letter code: Probable S-adenosylmethionine carrier 2, chloroplastic (345 aa).

Residues 1–31 (MTKALSGFCCSLSLSTLVRSSSSHMDSDIVS) constitute a chloroplast transit peptide. Solcar repeat units follow at residues 76–148 (RVLY…TKQK), 157–239 (LSAV…LRIG), and 252–334 (ENAM…TKQI). The next 5 membrane-spanning stretches (helical) occupy residues 82 to 102 (LITG…IDTI), 121 to 141 (YSGL…FFGV), 156 to 176 (NLSA…SSIV), 254 to 274 (AMIG…LDVI), and 309 to 329 (GMGP…GVLE).

This sequence belongs to the mitochondrial carrier (TC 2.A.29) family. Expressed at low levels in seedlings, leaves, flowers, stems and roots.

The protein resides in the plastid. Its subcellular location is the chloroplast membrane. In terms of biological role, probable S-adenosylmethionine (SAM) transporter able to catalyze both uniport and exchange reactions through membranes. The sequence is that of Probable S-adenosylmethionine carrier 2, chloroplastic (SAMC2) from Arabidopsis thaliana (Mouse-ear cress).